Consider the following 463-residue polypeptide: ATP synthase subunit beta (463 aa).

Gly151–Thr158 contacts ATP.

This sequence belongs to the ATPase alpha/beta chains family. F-type ATPases have 2 components, CF(1) - the catalytic core - and CF(0) - the membrane proton channel. CF(1) has five subunits: alpha(3), beta(3), gamma(1), delta(1), epsilon(1). CF(0) has three main subunits: a(1), b(2) and c(9-12). The alpha and beta chains form an alternating ring which encloses part of the gamma chain. CF(1) is attached to CF(0) by a central stalk formed by the gamma and epsilon chains, while a peripheral stalk is formed by the delta and b chains.

The protein localises to the cell membrane. It catalyses the reaction ATP + H2O + 4 H(+)(in) = ADP + phosphate + 5 H(+)(out). In terms of biological role, produces ATP from ADP in the presence of a proton gradient across the membrane. The catalytic sites are hosted primarily by the beta subunits. The sequence is that of ATP synthase subunit beta from Clostridium botulinum (strain Okra / Type B1).